We begin with the raw amino-acid sequence, 429 residues long: MRAELNQGLIDFLKASPTPFHATASLARRLEAAGYRRLDERDAWHTEAGGRYYVTRNDSSLIAIRLGRRSPLESGFRLVGAHTDSPCLRVKPNPEIARNGFLQLGVEVYGGALFAPWFDRDLSLAGRVTFRANGKLESRLVDFRKAIAVIPNLAIHLNRAANEGWPINAQNELPPIIAQLAPGEAADFRLLLDEQLLREHGITADVVLDYELSFYDTQSAAVVGLNDEFIAGARLDNLLSCHAGLEALLNAEGDENCILVCTDHEEVGSCSHCGADGPFLEQVLRRLLPEGDAFSRAIQRSLLVSADNAHGVHPNYADKHDANHGPALNGGPVIKINSNQRYATNSETAGFFRHLCQDSEVPVQSFVTRSDMGCGSTIGPITASQVGVRTVDIGLPTFAMHSIRELAGSHDLAHLVKVLGAFYASSELP.

His82, His156, and His401 together coordinate Zn(2+).

This sequence belongs to the peptidase M18 family. Zn(2+) serves as cofactor.

This chain is Probable M18 family aminopeptidase 2, found in Pseudomonas aeruginosa (strain UCBPP-PA14).